A 497-amino-acid polypeptide reads, in one-letter code: MEASAAEQPSSPPPPLGDHCIHDGDFVVLKREDVFKAVQVQRRKKVTFEKQWFYLDNAIGHSYGSAFDVSSGGSLQLRKKLEEPASETKEAGTDNRNIVDDGKSQKLTQDDIKALKDKGIKGEEIVQQLIENSTTFRDKTEFAQDKYIKKKKKKYEAIVTILKPSTRILSIMYYAREPGKINHMRYDTLAQMLTLGNIRAGNKMIVMETCSGLVLGAMMERMGGFGSIIQLYPGDGPVRAATACFGFPKSFLSGLYEFPLNKVNSLLNGTFSAEMLSSEPKDSTPVEESNGELEEKEIAEQADEDNIVDAAENNSGEQRPMEIVPGDPENKEPKEKRSKRDYIQEKQRRQEEQRKRHLEAAALLGERNADGLIVASRFHPTPLLLSLLDFVAPSRPFVVYCQYKEPLLECYTKLRERGGVINLRLSETWLRNYQVLPDRSHPKLLMSGGGGYLLSGFTVVSDSLRADPSLKSCTGALDPHKAEEPAAKKQKCMESAS.

The disordered stretch occupies residues 81-103; sequence LEEPASETKEAGTDNRNIVDDGK. The interval 95–105 is substrate; that stretch reads NRNIVDDGKSQ. Thr108 is subject to Phosphothreonine. Substrate stretches follow at residues 146–155 and 176–183; these read KYIKKKKKKY and REPGKINH. Positions 275-354 are disordered; it reads MLSSEPKDST…EKQRRQEEQR (80 aa). Residues 289-307 show a composition bias toward acidic residues; it reads SNGELEEKEIAEQADEDNI. A compositionally biased stretch (basic and acidic residues) spans 328–354; the sequence is PENKEPKEKRSKRDYIQEKQRRQEEQR. 2 residues coordinate substrate: Arg349 and Arg377. Substrate stretches follow at residues 415–423 and 434–441; these read RERGGVINL and QVLPDRSH. Positions 474 to 497 are disordered; sequence TGALDPHKAEEPAAKKQKCMESAS. Basic and acidic residues predominate over residues 478 to 487; the sequence is DPHKAEEPAA.

Belongs to the TRM6/GCD10 family. Heterotetramer; composed of two copies of TRMT6 and two copies of TRMT61A.

It is found in the nucleus. Its function is as follows. Substrate-binding subunit of tRNA (adenine-N(1)-)-methyltransferase, which catalyzes the formation of N(1)-methyladenine at position 58 (m1A58) in initiator methionyl-tRNA. Together with the TRMT61A catalytic subunit, part of a mRNA N(1)-methyltransferase complex that mediates methylation of adenosine residues at the N(1) position of a small subset of mRNAs: N(1) methylation takes place in tRNA T-loop-like structures of mRNAs and is only present at low stoichiometries. In Mus musculus (Mouse), this protein is tRNA (adenine(58)-N(1))-methyltransferase non-catalytic subunit TRM6 (Trmt6).